An 86-amino-acid polypeptide reads, in one-letter code: RNA-binding protein Hfq (86 aa).

One can recognise a Sm domain in the interval 9–68 (DPYLNVLRKERIPVSIYLVNGIKLQGQVESFDQFVVLLKNTVSQMVYKHAISTVVPSRPV).

Belongs to the Hfq family. As to quaternary structure, homohexamer.

Its function is as follows. RNA chaperone that binds small regulatory RNA (sRNAs) and mRNAs to facilitate mRNA translational regulation in response to envelope stress, environmental stress and changes in metabolite concentrations. Also binds with high specificity to tRNAs. In Saccharophagus degradans (strain 2-40 / ATCC 43961 / DSM 17024), this protein is RNA-binding protein Hfq.